The primary structure comprises 246 residues: Bromelain inhibitor (246 aa).

The first 19 residues, 1-19 (MNMLLLFLHEVINGERVTL), serve as a signal peptide directing secretion. Disulfide bonds link cysteine 22-cysteine 42, cysteine 25-cysteine 74, cysteine 27-cysteine 40, cysteine 49-cysteine 56, and cysteine 53-cysteine 65. A propeptide spanning residues 31–35 (TSSSD) is cleaved from the precursor. Propeptides lie at residues 77–95 (PVSS…RVTL) and 107–111 (TSSSD). 5 disulfides stabilise this stretch: cysteine 98-cysteine 118, cysteine 101-cysteine 150, cysteine 103-cysteine 116, cysteine 125-cysteine 132, and cysteine 129-cysteine 141. 2 propeptides span residues 153-171 (PVSS…RVTL) and 183-187 (TSSSD). 5 cysteine pairs are disulfide-bonded: cysteine 174–cysteine 194, cysteine 177–cysteine 226, cysteine 179–cysteine 192, cysteine 201–cysteine 208, and cysteine 205–cysteine 217. Residues 229-246 (PVSSWEARQKIKLLQGRE) constitute a propeptide that is removed on maturation.

The protein belongs to the protease inhibitor I67 family. Each inhibitor is composed of two chains, designated A and B linked by three disulfide bonds.

Functionally, weak inhibitor of cysteine proteinases. In Ananas comosus (Pineapple), this protein is Bromelain inhibitor.